The primary structure comprises 513 residues: uncharacterized protein (513 aa).

An HDOD domain is found at 254–447 (IPQLPSKLLE…INTIRFHHNL (194 aa)).

This is an uncharacterized protein from Treponema pallidum (strain Nichols).